Reading from the N-terminus, the 427-residue chain is MIKVNLDHTNIDINKVVDLNKVKQIHQMIINKTGKGNDYLGWLNWPNDYNKTEYEQMKQVANKLRSEIEVLVVIGIGGSYLGCRAADEMIRGLYHQDKVELIYAGNTMSSTYIYQLVEYLKNKNFGICVISKSGTTTEPGISFRVFEKLLVDKVGLNKAKDLIVAITDKNKGALKQLADKKGYQTFVIPNDIGGRFSVLTPVGIFPLLVSGINTDNIFNGALKAKNELINDDLSNQAYKYAVIRNYLYNQGYKTDALISYELQLQMLTEWWKQLFGESEGKDNKGLLPSSMIFSTDLHSLGQWVQEGPRNVMFETIIKIEKPNYDLNVPIDEDNYDGLNYLTKNSFHQINQTALKGAIQAHSVTGNMPNIVLEFEKMDDEQFGYLVYFFELALTMSAYLLDVNPFNQPGVEVYKYNMFKLLNKPGIK.

The active-site Proton donor is the glutamate 277. Residues histidine 298 and lysine 414 contribute to the active site.

It belongs to the GPI family.

It is found in the cytoplasm. The enzyme catalyses alpha-D-glucose 6-phosphate = beta-D-fructose 6-phosphate. Its pathway is carbohydrate biosynthesis; gluconeogenesis. It functions in the pathway carbohydrate degradation; glycolysis; D-glyceraldehyde 3-phosphate and glycerone phosphate from D-glucose: step 2/4. In terms of biological role, catalyzes the reversible isomerization of glucose-6-phosphate to fructose-6-phosphate. This Mycoplasma mycoides subsp. mycoides SC (strain CCUG 32753 / NCTC 10114 / PG1) protein is Glucose-6-phosphate isomerase.